We begin with the raw amino-acid sequence, 971 residues long: MGLKKRVSFDWLLKIGIILVLAFLGLFGIIFGSYKLLNDSRLGVVFNGSTTTTVYFLNHKSKDANKELDPTQKKDGNGSGNNTEMITDVNGFLNNIEKSYANSLYAQGFSSVNITKNSHDTSAKELSDKGVFDSSWLVNDGLPSISVTFEQRREEARTRARKRQIDAQVKRNALSAIEHNYKLSLETTDGIVLFDSFDKEFIRNSLTAVVPQTTNTNSALTFEYKLSKNVITKESLHNDFLDFIKSKSLTDSDYNTGNGQKSVEGSGKWFKDKANGSAQNGNKTLVLWKDKEGAVQYVRNIFNVPKGGTDYLTFNEREKNLWDFLHAEGNFSSGDNLFLQKNNNGNSPITKASDITLKNIYYIYAAPTHFSQVATKDNNNKDAADVVAVANSADTRKLRSGDATGFSGLFSNYILAEIRTEDPVAKNGDPVKVNATLQSFLDSNNQRLEHGGNIKFQVANFVNNDGSYVPASYLEASRVKVLLSNGFPETATIAAANTKLVNAPLSNTLARDVSNFASSFIALGVIILLATIALGIRYKLLGLYKALALALSAISSLAFFSAVGGVVDVFSFVGIFFVVAVNIINLITLAELFLRNIKNNASIVESWKLCLKRSFFTMIETHICWLLSALVVIYLSNYQVQQLGTLMAVSAITSYFLNYGLGVILVWLFVSSHSGLEWRFFLYKKDAQALTKTSSNYSILTENNDIQTDFFISKNQHDFFGKKKWSLLFIWLTVLAFGVVMLGLYLGAPQLLGNFLAADIESSTGIMLGVGVISLLYLLYSLPRYGVAYGISYLIALILLAAGLFGAMYLANFIFRIDQSTIQLIIFVYLFWLFFQARIGQTTIWTYCYWFKRSLKDRVFVKNLFNDNVNSQWRLDLIGSSVLILLFIVYAAFNFGGINGTINLVIFYLIAIVALFSVFVNGLPLFSFGLINGWLSPYNYVQIHITLRHKKQMFKEVDQIEEQLISGINSF.

The next 13 membrane-spanning stretches (helical) occupy residues 11–31, 516–536, 547–567, 569–589, 615–635, 651–671, 727–747, 763–783, 795–815, 817–837, 878–898, 900–920, and 923–943; these read WLLK…GIIF, FASS…ALGI, LALA…GGVV, VFSF…LITL, FFTM…VIYL, AITS…LFVS, LLFI…LYLG, STGI…YSLP, IALI…NFIF, IDQS…FFQA, IGSS…FGGI, GTIN…SVFV, and LPLF…YVQI.

The protein localises to the cell membrane. This is an uncharacterized protein from Mycoplasma pneumoniae (strain ATCC 29342 / M129 / Subtype 1) (Mycoplasmoides pneumoniae).